A 125-amino-acid polypeptide reads, in one-letter code: Gem-associated protein 7 (125 aa).

Met1 carries the post-translational modification N-acetylmethionine. One can recognise an SUZ-C domain in the interval 1 to 29; that stretch reads MQTPLATPVPVLRLPRGPDGSNRGFAPDG. Residues 1-52 form a disordered region; sequence MQTPLATPVPVLRLPRGPDGSNRGFAPDGRRAPPKPEVPEPPESRESWEQQA. A Phosphothreonine modification is found at Thr3. In terms of domain architecture, Sm spans 59–125; that stretch reads RYLRSLLAMV…SDIISYTFKP (67 aa).

Belongs to the gemin-7 family. In terms of assembly, part of the core SMN complex that contains SMN1, GEMIN2/SIP1, DDX20/GEMIN3, GEMIN4, GEMIN5, GEMIN6, GEMIN7, GEMIN8 and STRAP/UNRIP. Part of the SMN-Sm complex that contains SMN1, GEMIN2/SIP1, DDX20/GEMIN3, GEMIN4, GEMIN5, GEMIN6, GEMIN7, GEMIN8, STRAP/UNRIP and the Sm proteins SNRPB, SNRPD1, SNRPD2, SNRPD3, SNRPE, SNRPF and SNRPG. Interacts with GEMIN6; the interaction is direct. Interacts with STRAP/UNRIP; the interaction is direct. Interacts with GEMIN8; the interaction is direct. Interacts with SNRPB, SNRPD2, SNRPD3 and SNRPE; the interaction is direct.

It is found in the nucleus. It localises to the nucleoplasm. The protein localises to the gem. The protein resides in the cytoplasm. Its function is as follows. The SMN complex catalyzes the assembly of small nuclear ribonucleoproteins (snRNPs), the building blocks of the spliceosome, and thereby plays an important role in the splicing of cellular pre-mRNAs. Most spliceosomal snRNPs contain a common set of Sm proteins SNRPB, SNRPD1, SNRPD2, SNRPD3, SNRPE, SNRPF and SNRPG that assemble in a heptameric protein ring on the Sm site of the small nuclear RNA to form the core snRNP (Sm core). In the cytosol, the Sm proteins SNRPD1, SNRPD2, SNRPE, SNRPF and SNRPG are trapped in an inactive 6S pICln-Sm complex by the chaperone CLNS1A that controls the assembly of the core snRNP. To assemble core snRNPs, the SMN complex accepts the trapped 5Sm proteins from CLNS1A forming an intermediate. Binding of snRNA inside 5Sm triggers eviction of the SMN complex, thereby allowing binding of SNRPD3 and SNRPB to complete assembly of the core snRNP. The sequence is that of Gem-associated protein 7 (GEMIN7) from Bos taurus (Bovine).